A 485-amino-acid polypeptide reads, in one-letter code: DNA polymerase subunit gamma-2 (485 aa).

The segment at 28-67 (RQPEQLSKGTGSFVGPVRSQAELPRNEPREAPESGGEGSE) is disordered.

As to quaternary structure, heterotrimer composed of a catalytic subunit and a homodimer of accessory subunits (POLG:POLG2).

It localises to the mitochondrion. It is found in the mitochondrion matrix. The protein resides in the mitochondrion nucleoid. In terms of biological role, accessory subunit of DNA polymerase gamma solely responsible for replication of mitochondrial DNA (mtDNA). Acts as an allosteric regulator of the holoenzyme activities. Enhances the polymerase activity and the processivity of POLG by increasing its interactions with the DNA template. Suppresses POLG exonucleolytic proofreading especially toward homopolymeric templates bearing mismatched termini. Binds to single-stranded DNA. In Bos taurus (Bovine), this protein is DNA polymerase subunit gamma-2 (POLG2).